Consider the following 433-residue polypeptide: uncharacterized protein (433 aa).

The TRAM domain maps to 1–59; that stretch reads MGEEYEVEIGPVAHGGHCIARTSEGQVLFVRHALPGERVLARVTEGEEGARYLRADAVE. Positions 72, 80, 83, and 168 each coordinate [4Fe-4S] cluster. The S-adenosyl-L-methionine site is built by Q262, Y291, E315, and D359. C386 (nucleophile) is an active-site residue.

This sequence belongs to the class I-like SAM-binding methyltransferase superfamily. RNA M5U methyltransferase family.

This is an uncharacterized protein from Streptomyces avermitilis (strain ATCC 31267 / DSM 46492 / JCM 5070 / NBRC 14893 / NCIMB 12804 / NRRL 8165 / MA-4680).